Consider the following 38-residue polypeptide: Large ribosomal subunit protein bL36 (38 aa).

It belongs to the bacterial ribosomal protein bL36 family.

This chain is Large ribosomal subunit protein bL36, found in Limosilactobacillus fermentum (strain NBRC 3956 / LMG 18251) (Lactobacillus fermentum).